We begin with the raw amino-acid sequence, 361 residues long: 3-dehydroquinate synthase (361 aa).

Residues 106 to 110 (GVVGD), 130 to 131 (TT), Lys143, and Lys152 each bind NAD(+). 3 residues coordinate Zn(2+): Glu185, His247, and His264.

This sequence belongs to the sugar phosphate cyclases superfamily. Dehydroquinate synthase family. NAD(+) is required as a cofactor. Co(2+) serves as cofactor. The cofactor is Zn(2+).

Its subcellular location is the cytoplasm. It catalyses the reaction 7-phospho-2-dehydro-3-deoxy-D-arabino-heptonate = 3-dehydroquinate + phosphate. It functions in the pathway metabolic intermediate biosynthesis; chorismate biosynthesis; chorismate from D-erythrose 4-phosphate and phosphoenolpyruvate: step 2/7. Catalyzes the conversion of 3-deoxy-D-arabino-heptulosonate 7-phosphate (DAHP) to dehydroquinate (DHQ). The protein is 3-dehydroquinate synthase of Gloeobacter violaceus (strain ATCC 29082 / PCC 7421).